Here is an 85-residue protein sequence, read N- to C-terminus: UPF0297 protein LGAS_0422 (85 aa).

This sequence belongs to the UPF0297 family.

The chain is UPF0297 protein LGAS_0422 from Lactobacillus gasseri (strain ATCC 33323 / DSM 20243 / BCRC 14619 / CIP 102991 / JCM 1131 / KCTC 3163 / NCIMB 11718 / NCTC 13722 / AM63).